We begin with the raw amino-acid sequence, 464 residues long: Protein FAM90A5 (464 aa).

3 disordered regions span residues 16–42 (RAQTLQKQRRAPVGPRAPPPDEEDPRL), 70–389 (PATL…HDGA), and 415–437 (HSPEKPGAFLAQSPHVSEKSEAP). Composition is skewed to basic and acidic residues over residues 74–89 (GKKEGKENLKPWKPRV) and 97–114 (NKDKGEKEERPRQQDPQR). Low complexity predominate over residues 180–197 (LASLSPLRKASLSSSSSL).

Belongs to the FAM90 family.

This chain is Protein FAM90A5, found in Homo sapiens (Human).